A 1025-amino-acid polypeptide reads, in one-letter code: Multidrug resistance protein MdtC (1025 aa).

Transmembrane regions (helical) follow at residues 3-23, 333-353, 360-380, 387-407, 431-451, 463-483, 528-548, 853-873, 875-895, 897-917, 953-973, and 984-1004; these read FFAL…AITL, EVEQ…FLFL, IIPA…MYLC, LSLM…IVVL, VGFT…PLLL, FAVT…TLTP, LVGV…ISIP, VILI…LYES, VHPL…LLAL, LFNA…IGIV, PIMM…LSGG, and ITIV…TPVV.

This sequence belongs to the resistance-nodulation-cell division (RND) (TC 2.A.6) family. MdtC subfamily. Part of a tripartite efflux system composed of MdtA, MdtB and MdtC. MdtC forms a heteromultimer with MdtB.

The protein localises to the cell inner membrane. This is Multidrug resistance protein MdtC from Shigella boydii serotype 4 (strain Sb227).